The following is a 468-amino-acid chain: Glycine--tRNA ligase (468 aa).

2 residues coordinate substrate: Arg101 and Glu170. ATP contacts are provided by residues 202 to 204 (RNE), 212 to 217 (FRTREF), 289 to 290 (EL), and 333 to 336 (GLTR). A substrate-binding site is contributed by 217-221 (FEQME). 329 to 333 (EPAAG) provides a ligand contact to substrate.

The protein belongs to the class-II aminoacyl-tRNA synthetase family. As to quaternary structure, homodimer.

It localises to the cytoplasm. It catalyses the reaction tRNA(Gly) + glycine + ATP = glycyl-tRNA(Gly) + AMP + diphosphate. Catalyzes the attachment of glycine to tRNA(Gly). This is Glycine--tRNA ligase from Mycolicibacterium vanbaalenii (strain DSM 7251 / JCM 13017 / BCRC 16820 / KCTC 9966 / NRRL B-24157 / PYR-1) (Mycobacterium vanbaalenii).